Here is a 194-residue protein sequence, read N- to C-terminus: dTTP/UTP pyrophosphatase (194 aa).

D73 acts as the Proton acceptor in catalysis.

This sequence belongs to the Maf family. YhdE subfamily. A divalent metal cation is required as a cofactor.

It is found in the cytoplasm. The enzyme catalyses dTTP + H2O = dTMP + diphosphate + H(+). The catalysed reaction is UTP + H2O = UMP + diphosphate + H(+). Functionally, nucleoside triphosphate pyrophosphatase that hydrolyzes dTTP and UTP. May have a dual role in cell division arrest and in preventing the incorporation of modified nucleotides into cellular nucleic acids. In Clostridium botulinum (strain 657 / Type Ba4), this protein is dTTP/UTP pyrophosphatase.